Here is a 92-residue protein sequence, read N- to C-terminus: UPF0223 protein Sez_0908 (92 aa).

Belongs to the UPF0223 family.

The protein is UPF0223 protein Sez_0908 of Streptococcus equi subsp. zooepidemicus (strain MGCS10565).